The following is a 123-amino-acid chain: Protein Wnt-7 (123 aa).

Residue Ser1 is the site of O-palmitoleoyl serine; by PORCN attachment. Cys89 and Cys104 are disulfide-bonded. The N-linked (GlcNAc...) asparagine glycan is linked to Asn90.

The protein belongs to the Wnt family. In terms of processing, palmitoleoylation is required for efficient binding to frizzled receptors. Depalmitoleoylation leads to Wnt signaling pathway inhibition.

Its subcellular location is the secreted. The protein resides in the extracellular space. The protein localises to the extracellular matrix. Functionally, ligand for members of the frizzled family of seven transmembrane receptors. Probable developmental protein. May be a signaling molecule which affects the development of discrete regions of tissues. Is likely to signal over only few cell diameters. The chain is Protein Wnt-7 (WNT-7) from Evasterias troschelii (Mottled sea star).